The primary structure comprises 66 residues: Beta-defensin 107A (66 aa).

The N-terminal stretch at 1–22 (MKIFFFIFAALILLAQIFQART) is a signal peptide. Cystine bridges form between C37–C51 and C41–C60.

The protein belongs to the beta-defensin family.

It is found in the secreted. Has antibacterial activity. The polypeptide is Beta-defensin 107A (DEFB107A) (Macaca fascicularis (Crab-eating macaque)).